We begin with the raw amino-acid sequence, 251 residues long: Triosephosphate isomerase (251 aa).

9 to 11 (NWK) contacts substrate. His-94 (electrophile) is an active-site residue. The Proton acceptor role is filled by Glu-167. Substrate is bound by residues Gly-173, Ser-213, and 234–235 (GG).

Belongs to the triosephosphate isomerase family. In terms of assembly, homodimer.

The protein localises to the cytoplasm. The enzyme catalyses D-glyceraldehyde 3-phosphate = dihydroxyacetone phosphate. It participates in carbohydrate biosynthesis; gluconeogenesis. It functions in the pathway carbohydrate degradation; glycolysis; D-glyceraldehyde 3-phosphate from glycerone phosphate: step 1/1. In terms of biological role, involved in the gluconeogenesis. Catalyzes stereospecifically the conversion of dihydroxyacetone phosphate (DHAP) to D-glyceraldehyde-3-phosphate (G3P). This Finegoldia magna (strain ATCC 29328 / DSM 20472 / WAL 2508) (Peptostreptococcus magnus) protein is Triosephosphate isomerase.